We begin with the raw amino-acid sequence, 283 residues long: Pantothenate synthetase (283 aa).

ATP is bound at residue 30–37; the sequence is MGNLHLGH. His37 functions as the Proton donor in the catalytic mechanism. Gln61 contributes to the (R)-pantoate binding site. Gln61 is a binding site for beta-alanine. 149-152 is an ATP binding site; the sequence is GQKD. Position 155 (Gln155) interacts with (R)-pantoate. ATP-binding positions include Ile178 and 186–189; that span reads MSSR.

The protein belongs to the pantothenate synthetase family. Homodimer.

It is found in the cytoplasm. The enzyme catalyses (R)-pantoate + beta-alanine + ATP = (R)-pantothenate + AMP + diphosphate + H(+). The protein operates within cofactor biosynthesis; (R)-pantothenate biosynthesis; (R)-pantothenate from (R)-pantoate and beta-alanine: step 1/1. Catalyzes the condensation of pantoate with beta-alanine in an ATP-dependent reaction via a pantoyl-adenylate intermediate. The protein is Pantothenate synthetase of Shewanella halifaxensis (strain HAW-EB4).